A 211-amino-acid polypeptide reads, in one-letter code: SsrA-binding protein (211 aa).

Disordered stretches follow at residues 1–20 (MHRRSSKSYSSRNSKTPERS) and 170–211 (RLRR…RHEN). Polar residues predominate over residues 177–187 (QRNTQRSVTPR).

It belongs to the SmpB family.

Its subcellular location is the cytoplasm. In terms of biological role, required for rescue of stalled ribosomes mediated by trans-translation. Binds to transfer-messenger RNA (tmRNA), required for stable association of tmRNA with ribosomes. tmRNA and SmpB together mimic tRNA shape, replacing the anticodon stem-loop with SmpB. tmRNA is encoded by the ssrA gene; the 2 termini fold to resemble tRNA(Ala) and it encodes a 'tag peptide', a short internal open reading frame. During trans-translation Ala-aminoacylated tmRNA acts like a tRNA, entering the A-site of stalled ribosomes, displacing the stalled mRNA. The ribosome then switches to translate the ORF on the tmRNA; the nascent peptide is terminated with the 'tag peptide' encoded by the tmRNA and targeted for degradation. The ribosome is freed to recommence translation, which seems to be the essential function of trans-translation. The sequence is that of SsrA-binding protein from Tropheryma whipplei (strain TW08/27) (Whipple's bacillus).